Reading from the N-terminus, the 199-residue chain is Cutinase CUT1 (199 aa).

The N-terminal stretch at 1–18 (MKFTTLATLALGAVSALA) is a signal peptide. A propeptide spanning residues 19–27 (APVTELESR) is cleaved from the precursor. Glutamine 28 carries the pyrrolidone carboxylic acid modification. Cysteines 31 and 105 form a disulfide. Serine 116 serves as the catalytic Nucleophile. An intrachain disulfide couples cysteine 164 to cysteine 171. The active site involves aspartate 168. Residue histidine 181 is the Proton donor/acceptor of the active site.

It belongs to the cutinase family. Post-translationally, the 2 disulfide bonds play a critical role in holding the catalytic residues in juxta-position; reduction of the disulfide bridges results in the complete inactivation of the enzyme.

It catalyses the reaction cutin + H2O = cutin monomers.. Catalyzes the hydrolysis of complex carboxylic polyesters found in the cell wall of plants. Degrades cutin, a macromolecule that forms the structure of the plant cuticle. Also degrades suberin, a specialized macromolecule found in the cell wall of various plant tissues. This is Cutinase CUT1 from Coprinopsis cinerea (Inky cap fungus).